The sequence spans 217 residues: PRELI domain-containing protein 1, mitochondrial (217 aa).

Residues 36-174 (TEDIVHREVT…ILAKLQGEAP (139 aa)) form the PRELI/MSF1 domain.

In terms of assembly, forms a complex with TRIAP1 in the mitochondrion intermembrane space. Interacts with OPA1 and AIFM1. Abundantly expressed in all tissues tested except testis with highest levels in thymus.

The protein localises to the mitochondrion. It localises to the mitochondrion intermembrane space. It carries out the reaction a 1,2-diacyl-sn-glycero-3-phosphate(in) = a 1,2-diacyl-sn-glycero-3-phosphate(out). Functionally, involved in the modulation of the mitochondrial apoptotic pathway by ensuring the accumulation of cardiolipin (CL) in mitochondrial membranes. In vitro, the TRIAP1:PRELID1 complex mediates the transfer of phosphatidic acid (PA) between liposomes and probably functions as a PA transporter across the mitochondrion intermembrane space to provide PA for CL synthesis in the inner membrane. Regulates the mitochondrial apoptotic pathway in primary Th cells. Regulates Th cell differentiation by down-regulating STAT6 thereby reducing IL-4-induced Th2 cell number. May be important for the development of vital and immunocompetent organs. The protein is PRELI domain-containing protein 1, mitochondrial (Prelid1) of Mus musculus (Mouse).